Here is a 621-residue protein sequence, read N- to C-terminus: Hemolysin ahh1 (621 aa).

The first 30 residues, 1-30 (MKNKKPRKFITQAPTLSLLALALLAGSVQA), serve as a signal peptide directing secretion. Residues 491–610 (RPVNLQLGGF…QNVSVRTLTS (120 aa)) enclose the Ricin B-type lectin domain.

The protein belongs to the HlyA hemolysin family.

In terms of biological role, bacterial hemolysins are exotoxins that attack blood cell membranes and cause cell rupture by mechanisms not clearly defined. In Aeromonas hydrophila subsp. hydrophila (strain ATCC 7966 / DSM 30187 / BCRC 13018 / CCUG 14551 / JCM 1027 / KCTC 2358 / NCIMB 9240 / NCTC 8049), this protein is Hemolysin ahh1 (ahh1).